The primary structure comprises 545 residues: CTP synthase (545 aa).

The amidoligase domain stretch occupies residues 1-266 (MATNYIFVTG…DDIVTKRFNL (266 aa)). S14 contacts CTP. A UTP-binding site is contributed by S14. ATP contacts are provided by residues 15 to 20 (SLGKGI) and D72. 2 residues coordinate Mg(2+): D72 and E140. Residues 147–149 (DIE), 187–192 (KTKPTQ), and K223 contribute to the CTP site. UTP-binding positions include 187–192 (KTKPTQ) and K223. 239–241 (RDV) is a binding site for ATP. A Glutamine amidotransferase type-1 domain is found at 291–542 (TVGFVGKYVE…IEAAGEFHKE (252 aa)). G352 contacts L-glutamine. C379 (nucleophile; for glutamine hydrolysis) is an active-site residue. L-glutamine contacts are provided by residues 380–383 (LGMQ), E403, and R470. Catalysis depends on residues H515 and E517.

Belongs to the CTP synthase family. In terms of assembly, homotetramer.

It carries out the reaction UTP + L-glutamine + ATP + H2O = CTP + L-glutamate + ADP + phosphate + 2 H(+). The catalysed reaction is L-glutamine + H2O = L-glutamate + NH4(+). The enzyme catalyses UTP + NH4(+) + ATP = CTP + ADP + phosphate + 2 H(+). The protein operates within pyrimidine metabolism; CTP biosynthesis via de novo pathway; CTP from UDP: step 2/2. Its activity is regulated as follows. Allosterically activated by GTP, when glutamine is the substrate; GTP has no effect on the reaction when ammonia is the substrate. The allosteric effector GTP functions by stabilizing the protein conformation that binds the tetrahedral intermediate(s) formed during glutamine hydrolysis. Inhibited by the product CTP, via allosteric rather than competitive inhibition. In terms of biological role, catalyzes the ATP-dependent amination of UTP to CTP with either L-glutamine or ammonia as the source of nitrogen. Regulates intracellular CTP levels through interactions with the four ribonucleotide triphosphates. The chain is CTP synthase from Idiomarina loihiensis (strain ATCC BAA-735 / DSM 15497 / L2-TR).